Here is a 460-residue protein sequence, read N- to C-terminus: MHPNDQTIFALASGRLPSALAIVRVSGARARDVLAALTGALPPPRTVRRVRIRDVNHELIDDAVVLWFAAPASATGEDVAEFHIHGGRAVLAALVKALASFDDVRPAEPGEFTRRAFENGKLDLTEAEGLDDLIHADTEAQRRLAVRQLGGLLGDRARRWRAQIIEALALIEAGIDFADEGDVQGELMAPALRTIATLHGEIAEVLAAQGKSERLRDGLVVAIAGPPNVGKSTLINRLARREVAIVSPHAGTTRDVIEVQLDLGGYPVTLIDTAGIRESEDSVEQEGVRRAKARAAEADLVLWLGADEAIDVAVEGSAPVWRVRNKIDLVPQADTVGADSGGAGLAANLWQTEGNVAAREAFGISAKRGDGVGDMVEALAGFAAQYFAASGEAAVISRERHRLLLQQAEVMLRCSMTVGLAPELVAEELRLAAGALGRLLGRVDVEDVLGEIFGRFCIGK.

R24, E81, and K121 together coordinate (6S)-5-formyl-5,6,7,8-tetrahydrofolate. The region spanning 218–384 (GLVVAIAGPP…MVEALAGFAA (167 aa)) is the TrmE-type G domain. GTP is bound by residues 228–233 (NVGKST), 247–253 (SPHAGTT), and 272–275 (DTAG). Residues S232 and T253 each coordinate Mg(2+). K460 contacts (6S)-5-formyl-5,6,7,8-tetrahydrofolate.

Belongs to the TRAFAC class TrmE-Era-EngA-EngB-Septin-like GTPase superfamily. TrmE GTPase family. As to quaternary structure, homodimer. Heterotetramer of two MnmE and two MnmG subunits. K(+) is required as a cofactor.

The protein localises to the cytoplasm. Its function is as follows. Exhibits a very high intrinsic GTPase hydrolysis rate. Involved in the addition of a carboxymethylaminomethyl (cmnm) group at the wobble position (U34) of certain tRNAs, forming tRNA-cmnm(5)s(2)U34. In Rhodopseudomonas palustris (strain HaA2), this protein is tRNA modification GTPase MnmE.